The sequence spans 181 residues: Negative modulator of initiation of replication (181 aa).

Interaction with DNA stretches follow at residues 87–88 (AV), 116–120 (RTRVY), and 150–156 (NTNTGRK).

It belongs to the SeqA family. As to quaternary structure, homodimer. Polymerizes to form helical filaments.

It localises to the cytoplasm. Negative regulator of replication initiation, which contributes to regulation of DNA replication and ensures that replication initiation occurs exactly once per chromosome per cell cycle. Binds to pairs of hemimethylated GATC sequences in the oriC region, thus preventing assembly of replication proteins and re-initiation at newly replicated origins. Repression is relieved when the region becomes fully methylated. The polypeptide is Negative modulator of initiation of replication (Shigella flexneri).